The primary structure comprises 377 residues: NADH dehydrogenase [ubiquinone] 1 alpha subcomplex subunit 9, mitochondrial (377 aa).

A mitochondrion-targeting transit peptide spans 1–35 (MAAAVRFQVVRALPMSRPAISAAATSVFCSSSHRQ). The residue at position 175 (Lys175) is an N6-succinyllysine. 2 positions are modified to N6-acetyllysine: Lys189 and Lys370.

The protein belongs to the complex I NDUFA9 subunit family. As to quaternary structure, complex I is composed of 45 different subunits. This a component of the hydrophobic protein fraction. Interacts with BLOC1S1. Interacts with SLC2A4. Interacts with CLOCK. Interacts with RAB5IF. FAD is required as a cofactor. Post-translationally, acetylated on lysine residues. BLOC1S1 is required for acetylation. Acetylated by CLOCK in a circadian manner. Expressed by the principal cells of the epididymis. Detected in flagella of epididymal sperm (at protein level).

It localises to the mitochondrion matrix. Its function is as follows. Accessory subunit of the mitochondrial membrane respiratory chain NADH dehydrogenase (Complex I), that is believed not to be involved in catalysis. Complex I functions in the transfer of electrons from NADH to the respiratory chain. The immediate electron acceptor for the enzyme is believed to be ubiquinone. The sequence is that of NADH dehydrogenase [ubiquinone] 1 alpha subcomplex subunit 9, mitochondrial from Rattus norvegicus (Rat).